Here is a 417-residue protein sequence, read N- to C-terminus: MSYKIKDLSLASEGKKQIEWAERHMPTLMEIRKRFKAEKPLKGINISAVLHVTKETAALVKTLKIGGANVALAGSNPLSTQDDVAAALVEEGISVFAWKGENETEYYSNIESIVKIHEPNIVMDDGADLHAYIHEKVSSKLDIYGGTEETTTGVIRLKAMEKDGVLKYPLVAVNNAYTKYLFDNRYGTGQSAIDGILRATNILIAGKIAVVAGYGWVGRGIANRLRGMGARVIVTEVDPIRALEAVMDGFDVMPIAEASKVGDIFVTATGNTKAIRVEHMLNMKDGAILSNAGHFNVEVDVKGLKETAVKVRNIRPYVDEYTLPNGKRVYLLADGRLVNLAAAEGHPSEVMDMSFANQALAVEYLVKNRGKLEKKVYNMPMELDYEVARIKLKSMGIQIDELTEEQKEYLEQWKSGT.

Positions 53, 125, and 149 each coordinate substrate. 150 to 152 is an NAD(+) binding site; that stretch reads TTT. 2 residues coordinate substrate: K179 and D183. Residues N184, 213–218, E236, N271, 292–294, and N339 contribute to the NAD(+) site; these read GYGWVG and AGH.

It belongs to the adenosylhomocysteinase family. Requires NAD(+) as cofactor.

It localises to the cytoplasm. The enzyme catalyses S-adenosyl-L-homocysteine + H2O = L-homocysteine + adenosine. The protein operates within amino-acid biosynthesis; L-homocysteine biosynthesis; L-homocysteine from S-adenosyl-L-homocysteine: step 1/1. Its function is as follows. May play a key role in the regulation of the intracellular concentration of adenosylhomocysteine. The chain is Adenosylhomocysteinase from Saccharolobus solfataricus (strain ATCC 35092 / DSM 1617 / JCM 11322 / P2) (Sulfolobus solfataricus).